The sequence spans 489 residues: Inositol-pentakisphosphate 2-kinase (489 aa).

Residues 136-140 carry the EXKPK motif motif; sequence EIKPK.

Belongs to the IPK1 type 2 family. As to expression, in brain, it is expressed throughout the hippocampus (CA1, CA2, CA3 and dentate gyrus), inner layers of the cerebral cortex, and Purkinje cells of the cerebellum. In heart, it is expressed in cardiomyocytes but not in interstitial cells, blood vessels, or valves. Also expressed in testis.

The protein localises to the cytoplasm. It localises to the nucleus. It catalyses the reaction 1D-myo-inositol 1,3,4,5,6-pentakisphosphate + ATP = 1D-myo-inositol hexakisphosphate + ADP + H(+). In terms of biological role, phosphorylates Ins(1,3,4,5,6)P5 at position 2 to form Ins(1,2,3,4,5,6)P6 (InsP6 or phytate). InsP6 is involved in many processes such as mRNA export, non-homologous end-joining, endocytosis, ion channel regulation. It also protects cells from TNF-alpha-induced apoptosis. This chain is Inositol-pentakisphosphate 2-kinase (Ippk), found in Mus musculus (Mouse).